The sequence spans 253 residues: Phosphoglycerate mutase 2 (253 aa).

T3 is modified (phosphothreonine). Residues 10 to 17 (RHGESLWN), 23 to 24 (CG), R62, 89 to 92 (ERHY), K100, and 116 to 117 (RR) each bind substrate. Residue H11 is the Tele-phosphohistidine intermediate of the active site. S14 is subject to Phosphoserine. The active-site Proton donor/acceptor is the E89. S118 carries the phosphoserine modification. T121 is modified (phosphothreonine). Phosphotyrosine is present on residues Y132 and Y133. S135 carries the phosphoserine modification. T152 carries the phosphothreonine modification. A substrate-binding site is contributed by 187-188 (GN).

Belongs to the phosphoglycerate mutase family. BPG-dependent PGAM subfamily. In terms of assembly, homodimer. Interacts with ENO1. Expressed in the testes (at protein level).

The enzyme catalyses (2R)-2-phosphoglycerate = (2R)-3-phosphoglycerate. It carries out the reaction (2R)-3-phospho-glyceroyl phosphate = (2R)-2,3-bisphosphoglycerate + H(+). In terms of biological role, interconversion of 3- and 2-phosphoglycerate with 2,3-bisphosphoglycerate as the primer of the reaction. Can also catalyze the reaction of EC 5.4.2.4 (synthase), but with a reduced activity. The polypeptide is Phosphoglycerate mutase 2 (Pgam2) (Mus musculus (Mouse)).